Here is a 143-residue protein sequence, read N- to C-terminus: MVIERTLSIIKPDAVAKNIIGEIYTRFENAGLRIVAARMLHLSKEQAQEFYTVHKDRPFYNDLVGFMTSGPVMVQVLEGENAIARNREIMGATNPKEAVPGTIRADFAENIDANAVHGSDGSGTAEQEINFFFKSEDICPRIG.

ATP is bound by residues Lys11, Phe59, Arg87, Thr93, Arg104, and Asn114. The active-site Pros-phosphohistidine intermediate is the His117.

This sequence belongs to the NDK family. Homotetramer. The cofactor is Mg(2+).

The protein localises to the cytoplasm. It catalyses the reaction a 2'-deoxyribonucleoside 5'-diphosphate + ATP = a 2'-deoxyribonucleoside 5'-triphosphate + ADP. The catalysed reaction is a ribonucleoside 5'-diphosphate + ATP = a ribonucleoside 5'-triphosphate + ADP. Its function is as follows. Major role in the synthesis of nucleoside triphosphates other than ATP. The ATP gamma phosphate is transferred to the NDP beta phosphate via a ping-pong mechanism, using a phosphorylated active-site intermediate. The chain is Nucleoside diphosphate kinase from Nitrosococcus oceani (strain ATCC 19707 / BCRC 17464 / JCM 30415 / NCIMB 11848 / C-107).